Here is a 121-residue protein sequence, read N- to C-terminus: NAD(P)H-quinone oxidoreductase subunit M (121 aa).

The protein belongs to the complex I NdhM subunit family. In terms of assembly, NDH-1 can be composed of about 15 different subunits; different subcomplexes with different compositions have been identified which probably have different functions.

The protein resides in the cellular thylakoid membrane. The catalysed reaction is a plastoquinone + NADH + (n+1) H(+)(in) = a plastoquinol + NAD(+) + n H(+)(out). It catalyses the reaction a plastoquinone + NADPH + (n+1) H(+)(in) = a plastoquinol + NADP(+) + n H(+)(out). Functionally, NDH-1 shuttles electrons from an unknown electron donor, via FMN and iron-sulfur (Fe-S) centers, to quinones in the respiratory and/or the photosynthetic chain. The immediate electron acceptor for the enzyme in this species is believed to be plastoquinone. Couples the redox reaction to proton translocation, and thus conserves the redox energy in a proton gradient. Cyanobacterial NDH-1 also plays a role in inorganic carbon-concentration. This Synechococcus sp. (strain JA-3-3Ab) (Cyanobacteria bacterium Yellowstone A-Prime) protein is NAD(P)H-quinone oxidoreductase subunit M.